Consider the following 168-residue polypeptide: Monothiol glutaredoxin-S7, chloroplastic (168 aa).

Residues 1–54 (MAATAAASVAAISPLPGASLPRPVSARVPLLPRASPPTWRLSVGSARARSTRCL) constitute a chloroplast transit peptide. Positions 67-168 (RATLDKVVGS…QETLEKAMLS (102 aa)) constitute a Glutaredoxin domain. Lys-84 lines the glutathione pocket. Cys-92 serves as a coordination point for [2Fe-2S] cluster. Glutathione-binding positions include Arg-121, Phe-133, and 146–147 (CD).

This sequence belongs to the glutaredoxin family. CGFS subfamily.

It is found in the plastid. The protein localises to the chloroplast. In terms of biological role, may only reduce GSH-thiol disulfides, but not protein disulfides. This is Monothiol glutaredoxin-S7, chloroplastic (GRXS7) from Oryza sativa subsp. japonica (Rice).